The sequence spans 849 residues: MMEPPKPEPELQRFYHRLLRPLSLFPTRTTSPEPQKRPPQEGRILQSFPLAKLTVASLCSQVAKLLAGSGIAAGVPPEARLRLIKVILDELKCSWREPPAELSLSHKNNQKLRKRLEAYVLLSSEQLFLRYLHLLVTMSTPRGVFTESATLTRLAASLARDCTLFLTSPNVYRGLLADFQALLRAEQASGDVDKLHPVCPAGTFKLCPIPWPHSTGFAQVQCSNLNLNYLIQLSRPPEFLNEPGRMDPVKELKSIPRLKRKKPFHWLPSIGKKREIDISSSQMVSLPSYPVAPTSRASPSPFCPELRRGQSMPSLREGWRLADELGLPPLPSRPLTPLVLATESKPELTGLIVAEDLKQLIKKMKLEGTRYPPLDSGLPPLLGVVTRHPAAGHRLEELEKMLRNLQEEEASGQWDPQPPKSFPLHPQPVTITLKLRNEVVVQAAAVRVSDRNFLDSFHIEGAGALYNHLAGELDPKAIEKMDIDNFVGSTTREVYKELMSHVSSDHLHFDQGPLVEPAADKDWSTFLSSAFLRQEKQPQIINPELVGLYSQRANTLQSNTKKMPSLPSLQATKSWEKWSNKASLMNSWKTTLSVDDYFKYLTNHETDFLHVIFQMHEEEVPVEIVAPARESLEIQHPPPLLEDEEPDFVPGEWDWNTVLEHRLGAGKTPHLGEPHKILSLQKHLEQLWSVLEVPDKDQVDMTIKYSSKARLRQLPSLVNAWERALKPIQLREALLARLEWFEGQASNPNRFFKKTNLSSSHFLEENQVRSHLHRKLNLMESSLVSLLEEIELIFGEPVIFKGRPYLDKMKSDKVEMLYWLQQQRRVRHLVSALKDPHQSTLFRSSAASL.

Residues 387 to 415 adopt a coiled-coil conformation; sequence RHPAAGHRLEELEKMLRNLQEEEASGQWD.

The protein belongs to the CCDC87 family.

Functionally, plays a role in spermatogenesis, where it is important for normal sperm head morphology. Also required for the acrosome reaction and thus normal male fertility. The protein is Coiled-coil domain-containing protein 87 (CCDC87) of Homo sapiens (Human).